The primary structure comprises 273 residues: Dermonecrotic toxin LapSicTox-alphaIB1ai (273 aa).

His5 is an active-site residue. Mg(2+)-binding residues include Glu25 and Asp27. Catalysis depends on His41, which acts as the Nucleophile. 2 cysteine pairs are disulfide-bonded: Cys45-Cys51 and Cys47-Cys190. Asp85 contributes to the Mg(2+) binding site. Asn250 is a glycosylation site (N-linked (GlcNAc...) asparagine).

The protein belongs to the arthropod phospholipase D family. Class II subfamily. It depends on Mg(2+) as a cofactor. Expressed by the venom gland.

Its subcellular location is the secreted. It catalyses the reaction an N-(acyl)-sphingosylphosphocholine = an N-(acyl)-sphingosyl-1,3-cyclic phosphate + choline. It carries out the reaction an N-(acyl)-sphingosylphosphoethanolamine = an N-(acyl)-sphingosyl-1,3-cyclic phosphate + ethanolamine. The enzyme catalyses a 1-acyl-sn-glycero-3-phosphocholine = a 1-acyl-sn-glycero-2,3-cyclic phosphate + choline. The catalysed reaction is a 1-acyl-sn-glycero-3-phosphoethanolamine = a 1-acyl-sn-glycero-2,3-cyclic phosphate + ethanolamine. In terms of biological role, dermonecrotic toxins cleave the phosphodiester linkage between the phosphate and headgroup of certain phospholipids (sphingolipid and lysolipid substrates), forming an alcohol (often choline) and a cyclic phosphate. This toxin acts on sphingomyelin (SM). It may also act on ceramide phosphoethanolamine (CPE), lysophosphatidylcholine (LPC) and lysophosphatidylethanolamine (LPE), but not on lysophosphatidylserine (LPS), and lysophosphatidylglycerol (LPG). It acts by transphosphatidylation, releasing exclusively cyclic phosphate products as second products. Induces dermonecrosis, hemolysis, increased vascular permeability, edema, inflammatory response, and platelet aggregation. This is Dermonecrotic toxin LapSicTox-alphaIB1ai from Loxosceles apachea (Apache recluse spider).